A 242-amino-acid polypeptide reads, in one-letter code: DNA repair protein RecO (242 aa).

It belongs to the RecO family. In terms of assembly, monomer.

Involved in DNA repair and RecF pathway recombination. The chain is DNA repair protein RecO from Salmonella agona (strain SL483).